The primary structure comprises 506 residues: MSQSRARKVLIVGAGPVGALTALSLHRRGWEVEVWETRDDPRGQDAAPSNLRSINLAISSRGLEALRSVDPSIAENFLEEAIPMKGRMIHHTDGKQESQLYDPIGGQSINSISRPILNQRLVQSLPEAVKLRFNTKLKHIDFKNRVAYASHKQETSLLPGEESEKDKKQNTEDEDGTAFDLVIGCDGSWSKVRTAMMRAERIDFSQSFIPHAYIELHMPSDPAFPGGYAMDKNHLHIWPRHAFMLIGLPNKDGSFTLTLFIPFSSLELLDTRESAAAFFREHFPSAVDIVGEKVLLDDFEKNPRGNLVTINCTPSAWSSHAILLGDASHSMVPFYGQGLNCGLEDVRVLSSILERHHISPTTTLALGETDPELELALKAYSDERQGDLKAICELALQNYTEMRSHVLSPLHHLRRQVDKVFTTLFRSAPQATLSLMEPFPTKKVRGWTSLYEMVTFRPDVGYSEALRKERWQKDVVGYAGWIGGVVGVGAAGVFAATMAKKWLERR.

The segment at 153–174 is disordered; sequence QETSLLPGEESEKDKKQNTEDE. A compositionally biased stretch (basic and acidic residues) spans 162-171; the sequence is ESEKDKKQNT.

Belongs to the aromatic-ring hydroxylase family. KMO subfamily. Requires FAD as cofactor.

Its subcellular location is the mitochondrion outer membrane. It catalyses the reaction L-kynurenine + NADPH + O2 + H(+) = 3-hydroxy-L-kynurenine + NADP(+) + H2O. Its pathway is cofactor biosynthesis; NAD(+) biosynthesis; quinolinate from L-kynurenine: step 1/3. In terms of biological role, catalyzes the hydroxylation of L-kynurenine (L-Kyn) to form 3-hydroxy-L-kynurenine (L-3OHKyn). Required for synthesis of quinolinic acid. This is Kynurenine 3-monooxygenase from Cryptococcus neoformans var. neoformans serotype D (strain JEC21 / ATCC MYA-565) (Filobasidiella neoformans).